Here is a 656-residue protein sequence, read N- to C-terminus: Nexilin (656 aa).

3 disordered regions span residues 1 to 131 (MNDV…IEQD), 165 to 198 (RAAA…EEEC), and 215 to 284 (TEAK…VFKE). Residues 11-26 (LLSSSKPVPKSYVPKL) show a composition bias toward low complexity. The span at 27–78 (GKGDVKDKFEAMQRAREERNQRRSRDEKQRRKEQYIREREWNRRKQEIKDML) shows a compositional bias: basic and acidic residues. Ser-80 bears the Phosphoserine mark. 3 stretches are compositionally biased toward basic and acidic residues: residues 103–131 (GKFD…IEQD), 169–198 (NRKD…EEEC), and 216–269 (EAKK…RNMV). Phosphoserine occurs at positions 221, 330, 337, and 345. Phosphothreonine is present on Thr-350. Disordered stretches follow at residues 468-492 (NFHE…HKVN) and 529-564 (AALQ…APWF). Residues Ser-544 and Ser-549 each carry the phosphoserine modification. Thr-551 carries the post-translational modification Phosphothreonine. Residues 562–650 (PWFKKPLRNT…GSAASTCILT (89 aa)) enclose the Ig-like domain.

Interacts with F-actin. In terms of tissue distribution, expressed in brain, testis, spleen and fibroblasts (at protein level). Not detected in liver, kidney or epithelial cells (at protein level).

The protein resides in the cytoplasm. The protein localises to the cytoskeleton. It localises to the cell junction. Its subcellular location is the adherens junction. It is found in the myofibril. The protein resides in the sarcomere. The protein localises to the z line. In terms of biological role, involved in regulating cell migration through association with the actin cytoskeleton. Has an essential role in the maintenance of Z line and sarcomere integrity. The polypeptide is Nexilin (Rattus norvegicus (Rat)).